The primary structure comprises 149 residues: UPF0178 protein Cphy_3042 (149 aa).

Positions 112 to 128 (QRRHGKQNLHSKNNKKR) are enriched in basic residues. The tract at residues 112–132 (QRRHGKQNLHSKNNKKRTTGD) is disordered.

The protein belongs to the UPF0178 family.

This chain is UPF0178 protein Cphy_3042, found in Lachnoclostridium phytofermentans (strain ATCC 700394 / DSM 18823 / ISDg) (Clostridium phytofermentans).